We begin with the raw amino-acid sequence, 234 residues long: uncharacterized protein (234 aa).

The segment covering 1-12 (MGSSSSSSLNNS) has biased composition (low complexity). The interval 1–184 (MGSSSSSSLN…TPYLSGANSR (184 aa)) is disordered. Composition is skewed to polar residues over residues 21–40 (TPES…SILS) and 52–64 (KSTS…NLTP). Low complexity predominate over residues 66–77 (KSRWSFSSSKKS). The span at 105-120 (GDFTPSLGNTPKSSFS) shows a compositional bias: polar residues. Residues 152 to 167 (LGELFRDSIREEREES) are compositionally biased toward basic and acidic residues.

As to quaternary structure, interacts with RLK902. As to expression, expressed in stems, rosette leaves and roots and weakly in inflorescences.

This is an uncharacterized protein from Arabidopsis thaliana (Mouse-ear cress).